We begin with the raw amino-acid sequence, 359 residues long: RuBisCO accumulation factor 1 (359 aa).

Residues 12–195 form an N-terminal alpha-helix region; sequence LSPEETDALF…RQKIEQLLSD (184 aa). The interval 219–345 is C-terminal beta-sheet; the sequence is PLLIPVAGSL…VLLVMRPKKI (127 aa).

This sequence belongs to the RAF family. In terms of assembly, homodimer. Forms an RbcL(8)-Raf1(8) complex. Forms complexes of many stoichiometries with RbcL with and without RbcS. RbcX and Raf1 can bind simultaneously to RbcL.

The protein resides in the cytoplasm. Its function is as follows. A major RuBisCO chaperone. Acts after GroEL-GroES chaperonin to fold and/or assemble the large subunit of RuBisCO (ccbL, rbcL). Cooperates with RbcX in RbcL folding, plays the major role in assembly of dimers into RbcL(8)-Raf1(8) intermediate complexes. RbcS replaces Raf1, leading to holoenzyme formation. Raf1 and RbcX are probably functionally redundant; it has been suggested they may cooperate. The chain is RuBisCO accumulation factor 1 from Picosynechococcus sp. (strain ATCC 27264 / PCC 7002 / PR-6) (Agmenellum quadruplicatum).